The following is a 401-amino-acid chain: Phosrestin-1 (401 aa).

This sequence belongs to the arrestin family.

Its function is as follows. Directly interacts with light-activated rhodopsin thereby activating the phosphorylation of metarhodopsin. Inhibits the dephosphorylation of metarhodopsin. The protein is Phosrestin-1 (ARR2) of Calliphora vicina (Blue blowfly).